We begin with the raw amino-acid sequence, 171 residues long: Photosystem I assembly protein Ycf3 (171 aa).

3 TPR repeats span residues 35–68, 72–105, and 120–153; these read AFTY…EIDP, SYIL…NPSL, and GEQA…APSN.

Belongs to the Ycf3 family.

It is found in the plastid. It localises to the chloroplast thylakoid membrane. Functionally, essential for the assembly of the photosystem I (PSI) complex. May act as a chaperone-like factor to guide the assembly of the PSI subunits. The chain is Photosystem I assembly protein Ycf3 from Angiopteris evecta (Mule's foot fern).